The primary structure comprises 463 residues: UDP-N-acetylmuramate--L-alanine ligase (463 aa).

112–118 (GTHGKTT) is an ATP binding site.

Belongs to the MurCDEF family.

Its subcellular location is the cytoplasm. The enzyme catalyses UDP-N-acetyl-alpha-D-muramate + L-alanine + ATP = UDP-N-acetyl-alpha-D-muramoyl-L-alanine + ADP + phosphate + H(+). It functions in the pathway cell wall biogenesis; peptidoglycan biosynthesis. Functionally, cell wall formation. In Dechloromonas aromatica (strain RCB), this protein is UDP-N-acetylmuramate--L-alanine ligase.